A 216-amino-acid polypeptide reads, in one-letter code: LexA repressor (216 aa).

Residues 28–48 (RAEIAAELGFSSANSAEEHLR) constitute a DNA-binding region (H-T-H motif). Catalysis depends on for autocatalytic cleavage activity residues Ser134 and Lys171.

It belongs to the peptidase S24 family. As to quaternary structure, homodimer.

It carries out the reaction Hydrolysis of Ala-|-Gly bond in repressor LexA.. In terms of biological role, represses a number of genes involved in the response to DNA damage (SOS response), including recA and lexA. In the presence of single-stranded DNA, RecA interacts with LexA causing an autocatalytic cleavage which disrupts the DNA-binding part of LexA, leading to derepression of the SOS regulon and eventually DNA repair. The protein is LexA repressor of Paraburkholderia phytofirmans (strain DSM 17436 / LMG 22146 / PsJN) (Burkholderia phytofirmans).